A 194-amino-acid chain; its full sequence is uncharacterized protein (194 aa).

The disordered stretch occupies residues 25 to 156 (PSWACRRGGP…ESPLGTLPCS (132 aa)). Positions 43-57 (GPSTVPVTPTAGSCQ) are enriched in polar residues. Residues 104-113 (SSSPGPSFHL) show a composition bias toward low complexity.

This is an uncharacterized protein from Homo sapiens (Human).